Reading from the N-terminus, the 54-residue chain is Lectin alpha-1 chain (54 aa).

Belongs to the leguminous lectin family. Tetramer of two alpha and two beta chains.

The protein is Lectin alpha-1 chain of Lathyrus cicera (Flat-pod pea).